We begin with the raw amino-acid sequence, 122 residues long: Ribosome-binding factor A (122 aa).

The protein belongs to the RbfA family. In terms of assembly, monomer. Binds 30S ribosomal subunits, but not 50S ribosomal subunits or 70S ribosomes.

The protein resides in the cytoplasm. Its function is as follows. One of several proteins that assist in the late maturation steps of the functional core of the 30S ribosomal subunit. Associates with free 30S ribosomal subunits (but not with 30S subunits that are part of 70S ribosomes or polysomes). Required for efficient processing of 16S rRNA. May interact with the 5'-terminal helix region of 16S rRNA. The sequence is that of Ribosome-binding factor A from Syntrophomonas wolfei subsp. wolfei (strain DSM 2245B / Goettingen).